Consider the following 250-residue polypeptide: Triosephosphate isomerase (250 aa).

Substrate is bound by residues Asn-10 and Lys-12. His-94 (electrophile) is an active-site residue. Glu-167 functions as the Proton acceptor in the catalytic mechanism.

It belongs to the triosephosphate isomerase family. Homodimer.

It localises to the cytoplasm. It carries out the reaction D-glyceraldehyde 3-phosphate = dihydroxyacetone phosphate. It functions in the pathway carbohydrate biosynthesis; gluconeogenesis. It participates in carbohydrate degradation; glycolysis; D-glyceraldehyde 3-phosphate from glycerone phosphate: step 1/1. In Taenia solium (Pork tapeworm), this protein is Triosephosphate isomerase.